Here is a 271-residue protein sequence, read N- to C-terminus: Acyl-[acyl-carrier-protein]--UDP-N-acetylglucosamine O-acyltransferase (271 aa).

It belongs to the transferase hexapeptide repeat family. LpxA subfamily. In terms of assembly, homotrimer.

Its subcellular location is the cytoplasm. It carries out the reaction a (3R)-hydroxyacyl-[ACP] + UDP-N-acetyl-alpha-D-glucosamine = a UDP-3-O-[(3R)-3-hydroxyacyl]-N-acetyl-alpha-D-glucosamine + holo-[ACP]. It participates in glycolipid biosynthesis; lipid IV(A) biosynthesis; lipid IV(A) from (3R)-3-hydroxytetradecanoyl-[acyl-carrier-protein] and UDP-N-acetyl-alpha-D-glucosamine: step 1/6. In terms of biological role, involved in the biosynthesis of lipid A, a phosphorylated glycolipid that anchors the lipopolysaccharide to the outer membrane of the cell. The protein is Acyl-[acyl-carrier-protein]--UDP-N-acetylglucosamine O-acyltransferase of Agrobacterium fabrum (strain C58 / ATCC 33970) (Agrobacterium tumefaciens (strain C58)).